The sequence spans 334 residues: Putative transport protein MTH_1211 (334 aa).

The next 8 membrane-spanning stretches (helical) occupy residues Ala24–Val44, Val60–Thr80, Ile84–Gly104, Tyr131–Ser151, Val189–Ala209, Ala220–Ala240, Ile255–Leu275, and Met289–Val309.

Belongs to the autoinducer-2 exporter (AI-2E) (TC 2.A.86) family.

The protein localises to the cell membrane. This is Putative transport protein MTH_1211 from Methanothermobacter thermautotrophicus (strain ATCC 29096 / DSM 1053 / JCM 10044 / NBRC 100330 / Delta H) (Methanobacterium thermoautotrophicum).